We begin with the raw amino-acid sequence, 860 residues long: Nuclear pore complex protein NUP93B (860 aa).

This sequence belongs to the nucleoporin interacting component (NIC) family. As to quaternary structure, part of the nuclear pore complex (NPC). The NPC has an eight-fold symmetrical structure comprising a central transport channel and two rings, the cytoplasmic and nuclear rings, to which eight filaments are attached. The cytoplasmic filaments have loose ends, while the nuclear filaments are joined in a distal ring, forming a nuclear basket. NPCs are highly dynamic in configuration and composition, and can be devided in 3 subcomplexes, the NUP62 subcomplex, the NUP107-160 subcomplex and the NUP93 subcomplex, containing approximately 30 different nucleoporin proteins.

The protein resides in the nucleus envelope. Its subcellular location is the nucleus. It localises to the nuclear pore complex. In Arabidopsis thaliana (Mouse-ear cress), this protein is Nuclear pore complex protein NUP93B.